A 436-amino-acid chain; its full sequence is Cyclic nucleotide-binding domain-containing protein 1 (436 aa).

Positions 89-105 (EQRELNEGKEESQHQQP) are enriched in basic and acidic residues. The tract at residues 89-108 (EQRELNEGKEESQHQQPDDS) is disordered. Residue 322 to 436 (YYEEWPTLSI…IIEDKDLFVA (115 aa)) participates in a nucleoside 3',5'-cyclic phosphate binding.

This Homo sapiens (Human) protein is Cyclic nucleotide-binding domain-containing protein 1 (CNBD1).